The chain runs to 256 residues: Alcohol dehydrogenase (256 aa).

Position 2 is an N-acetylserine (S2). NAD(+) contacts are provided by residues 12 to 41 and D65; that span reads FVAG…LDRI. A substrate-binding site is contributed by S140. The active-site Proton acceptor is the Y153. K157 serves as a coordination point for NAD(+).

This sequence belongs to the short-chain dehydrogenases/reductases (SDR) family. As to quaternary structure, homodimer.

The enzyme catalyses a primary alcohol + NAD(+) = an aldehyde + NADH + H(+). It carries out the reaction a secondary alcohol + NAD(+) = a ketone + NADH + H(+). Inhibited by 2,2,2-trifluoroethanol and pyrazole. This chain is Alcohol dehydrogenase (Adh), found in Drosophila melanogaster (Fruit fly).